Reading from the N-terminus, the 166-residue chain is Phosphopantetheine adenylyltransferase (166 aa).

Position 9 (S9) interacts with substrate. ATP is bound by residues 9–10 (SF) and H17. Substrate is bound by residues K41, T74, and R88. Residues 89–91 (GLR), E99, and 124–130 (DSFISSS) contribute to the ATP site.

It belongs to the bacterial CoaD family. In terms of assembly, homohexamer. Mg(2+) is required as a cofactor.

Its subcellular location is the cytoplasm. The enzyme catalyses (R)-4'-phosphopantetheine + ATP + H(+) = 3'-dephospho-CoA + diphosphate. Its pathway is cofactor biosynthesis; coenzyme A biosynthesis; CoA from (R)-pantothenate: step 4/5. Its function is as follows. Reversibly transfers an adenylyl group from ATP to 4'-phosphopantetheine, yielding dephospho-CoA (dPCoA) and pyrophosphate. The polypeptide is Phosphopantetheine adenylyltransferase (Lactobacillus gasseri (strain ATCC 33323 / DSM 20243 / BCRC 14619 / CIP 102991 / JCM 1131 / KCTC 3163 / NCIMB 11718 / NCTC 13722 / AM63)).